The primary structure comprises 421 residues: TITAN-like protein (421 aa).

Residues E11–H32 form a C2H2-type 1; degenerate zinc finger. Residues V70–H100 form a C2H2-type 2; degenerate zinc finger. The tract at residues I279–D306 is disordered. 2 short sequence motifs (nuclear localization signal) span residues N328–R335 and T377–E384. The segment at G376–E421 is disordered. Residues T377–K389 are compositionally biased toward basic and acidic residues.

In terms of tissue distribution, also present in cotyledons, hypocotyls, stems, veins of sepals and stigmas, and actively dividing tissues such as shoot apical meristem, root tips and emerging true leaves. Weak expression in petals and anthers, and not detected in mature leaves. In seeds, expressed in both the endosperm and embryo.

Its subcellular location is the nucleus. Its function is as follows. Key regulator for endosperm and embryo nuclear divisions. The protein is TITAN-like protein of Arabidopsis thaliana (Mouse-ear cress).